The chain runs to 270 residues: Ribonuclease HII (270 aa).

An RNase H type-2 domain is found at 28-222 (RQVAGADEAG…VSGRQGAPPR (195 aa)). A divalent metal cation-binding residues include Asp-34, Glu-35, and Asp-128.

The protein belongs to the RNase HII family. Requires Mn(2+) as cofactor. Mg(2+) is required as a cofactor.

It is found in the cytoplasm. It carries out the reaction Endonucleolytic cleavage to 5'-phosphomonoester.. Endonuclease that specifically degrades the RNA of RNA-DNA hybrids. The chain is Ribonuclease HII from Salinispora tropica (strain ATCC BAA-916 / DSM 44818 / JCM 13857 / NBRC 105044 / CNB-440).